A 362-amino-acid polypeptide reads, in one-letter code: Spermidine/putrescine import ATP-binding protein PotA (362 aa).

One can recognise an ABC transporter domain in the interval 4 to 235 (IKLDHITKQY…PVNDFVARFI (232 aa)). 37-44 (GPSGSGKT) is a binding site for ATP.

Belongs to the ABC transporter superfamily. Spermidine/putrescine importer (TC 3.A.1.11.1) family. As to quaternary structure, the complex is composed of two ATP-binding proteins (PotA), two transmembrane proteins (PotB and PotC) and a solute-binding protein (PotD).

Its subcellular location is the cell membrane. It catalyses the reaction ATP + H2O + polyamine-[polyamine-binding protein]Side 1 = ADP + phosphate + polyamineSide 2 + [polyamine-binding protein]Side 1.. Part of the ABC transporter complex PotABCD involved in spermidine/putrescine import. Responsible for energy coupling to the transport system. This is Spermidine/putrescine import ATP-binding protein PotA from Lactobacillus delbrueckii subsp. bulgaricus (strain ATCC 11842 / DSM 20081 / BCRC 10696 / JCM 1002 / NBRC 13953 / NCIMB 11778 / NCTC 12712 / WDCM 00102 / Lb 14).